Here is a 1123-residue protein sequence, read N- to C-terminus: Phytochrome 1 (1123 aa).

Positions 1–15 are enriched in low complexity; that stretch reads MSTPKKTYSSTSSAK. Positions 1 to 20 are disordered; the sequence is MSTPKKTYSSTSSAKSKAHS. Residues 216–395 enclose the GAF domain; the sequence is DIGLLCDTVV…VFGLQLNMEV (180 aa). A phytochromobilin-binding site is contributed by C321. PAS domains are found at residues 610–681 and 744–815; these read VANE…LRGE and DYKT…TKFM. A Histidine kinase domain is found at 895–1115; it reads YIRQEIKNPL…VVNVELPMAQ (221 aa).

It belongs to the phytochrome family. In terms of assembly, homodimer. Post-translationally, contains one covalently linked phytochromobilin chromophore.

It localises to the cytoplasm. Its function is as follows. Regulatory photoreceptor which exists in two forms that are reversibly interconvertible by light: the Pr form that absorbs maximally in the red region of the spectrum and the Pfr form that absorbs maximally in the far-red region. Photoconversion of Pr to Pfr induces an array of morphogenetic responses, whereas reconversion of Pfr to Pr cancels the induction of those responses. Pfr controls the expression of a number of nuclear genes including those encoding the small subunit of ribulose-bisphosphate carboxylase, chlorophyll A/B binding protein, protochlorophyllide reductase, rRNA, etc. It also controls the expression of its own gene(s) in a negative feedback fashion. Mediates chloroplast avoidance movement in cytoplasm. This chain is Phytochrome 1 (PHY1), found in Physcomitrium patens (Spreading-leaved earth moss).